Reading from the N-terminus, the 226-residue chain is MKVTYHGHSVVKIETNGKTIFIDPFITGNGATDLKLEDVKADVILLTHGHGDHVGDTVQLAKKNNALVIAPFELATYLGWQGVNTHPMHIGGAHQFDFGKVKLTQAFHGSGYVTEDKQIIYLGMPAGILFTAEGKTIYHAGDTGLFSDMKLIGERNSIDVAFLPIGDNFTMGPEDAAVAAEWLRAKIVVPIHYNTFPVIAQDPHQFVALLPDGVGRVLKPGEGIEL.

Belongs to the UPF0173 family.

The polypeptide is UPF0173 metal-dependent hydrolase GWCH70_2696 (Geobacillus sp. (strain WCH70)).